Reading from the N-terminus, the 1378-residue chain is MVKNQIFSLKSLWSSSIFKILYCYLFTSLLLILSTWVSVNDGLSVREHIILLRLYFDTNGTTWYHNQGWKEYADCILAADGSVRKALESIDPLTGQIPQYLWADHFSQLDNNKTLYKIIHNQIQGHKVVICNAFGITCEDRINLTGIDLSNNNLKGNITPYLPYLLHLRNLNLSNNHLSGCFPDGLLKAQSLVALDLSYNNISCTLSLADSKAISYIDISHNHLTGYFKNVWKTPNLLFLDLSFNKLYGTILKEFFRQKSLDYVNLSSNQLIGFLPILSKSRISYLNISNNRLIGNITLLTCWKAGSLRIFDAENNMFEGALPESIFDHSPLQYVNLKGNIVKDPLPSILDCAKSEVKIIVPDGLKQNKCDPKVSSNWVLILNPLGEEFNIVGSDFGINSKSINIQFQNGLHCVDNVTTIIKSNTIISCKNPQGRNSTYLKLTIPTGEPGNFTVIKQQLYYYRPIIKSCSKVYKNIGGEITILGSHLESFNKTSNGKKMITVSIGNIKNSFTNVTSSINSDGFSGEVISCRNADIITPDMITCSIPSNTNLQQPAEIQIIIDGITAYVPIDSTRPHFLYKGVYNKDITISKPTEYNQTITISVPNETIIDMDQVVRVLIDDNDDSICKNIQHINKTSIQCLPYSETCGSNVKVTLVTKYGEPQFTTSLNYPPPIITRVTQGIDSTSNSIITINGKFLKTGGKRNLSIKINDTICCPLYNEYYYKQDELDDDNNNNNNNNNNSTTDINNNNNIIKNNNLIKEEQILCYYQINQSLPIHLNLPVTLTLSNQTVVKNNIYSQTNSTCPNNCVKHRTNGCRSGICECYPNLTGPSCDENIPESTISNFSNYLPDFILSFPKFITNNTFNIKFLSISEVNESGNIVDRFCSLNNNNNNNNNNNNKNNNNNNNDSNNEKEVVEDEEEDLDYSSQNDNNNINNNNNENNNENKLNWKLINQTKTTNALYTLKIKKKNVTLDILISSDNNQHREVYFAGEVIQVPKSSIELIVNLKGKWLFKDPKNQLKFNFLVKPVNDHDYSLCLPSPFVLISDEPFRWITMDVDSSTIFAKPSNRFLLNNYLVRVIEPNYKLSDSNLTLNLYYQFNQTTLKQQDNHGDDNSDNSIKYTEDSLKFRIDFSTFNSRREINPKPRGCFKDNTHKFPYDYYIVFFGCASGLILVLVICIVQCSRIESRQRKQIIKSFKATQKMPVEIKTPLLPPSFHFNFLDYNNMDLNNNNNNNNNNNNNNNNNNNNNNNNNNNNNNNNNFNDGSDTFNNNNKKNLNYEDNCDTVGFDGKENDIKNINNKKDEKEDDGDDDDDEDDDEYEDDTQPCSSGNSSRSKGSDGGSSSNSLSSDKQSFNNGNENNSIIPENKKKHLTIINKK.

Residues 17-37 (IFKILYCYLFTSLLLILSTWV) traverse the membrane as a helical segment. Residues Asn-59, Asn-112, Asn-143, Asn-172, and Asn-201 are each glycosylated (N-linked (GlcNAc...) asparagine). 9 LRR repeats span residues 143–165 (NLTG…LPYL), 167–188 (HLRN…GLLK), 191–212 (SLVA…ADSK), 213–235 (AISY…WKTP), 236–257 (NLLF…EFFR), 260–281 (SLDY…LSKS), 282–304 (RISY…TCWK), 307–329 (SLRI…IFDH), and 331–353 (PLQY…LDCA). Asn-265, Asn-287, and Asn-296 each carry an N-linked (GlcNAc...) asparagine glycan. 20 N-linked (GlcNAc...) asparagine glycosylation sites follow: Asn-416, Asn-436, Asn-451, Asn-491, Asn-513, Asn-596, Asn-605, Asn-634, Asn-704, Asn-710, Asn-740, Asn-741, Asn-771, Asn-788, Asn-801, Asn-826, Asn-843, Asn-861, Asn-875, and Asn-907. The stretch at 886–946 (SLNNNNNNNN…NNNENNNENK (61 aa)) forms a coiled coil. Over residues 891–909 (NNNNNNNNNKNNNNNNNDS) the composition is skewed to low complexity. Residues 891–945 (NNNNNNNNNKNNNNNNNDSNNEKEVVEDEEEDLDYSSQNDNNNINNNNNENNNEN) are disordered. Over residues 915 to 924 (VVEDEEEDLD) the composition is skewed to acidic residues. The segment covering 929-945 (NDNNNINNNNNENNNEN) has biased composition (low complexity). N-linked (GlcNAc...) asparagine glycans are attached at residues Asn-953, Asn-970, Asn-1090, and Asn-1100. The helical transmembrane segment at 1160–1180 (YYIVFFGCASGLILVLVICIV) threads the bilayer. A compositionally biased stretch (low complexity) spans 1227–1276 (DLNNNNNNNNNNNNNNNNNNNNNNNNNNNNNNNNNFNDGSDTFNNNNKKN). The disordered stretch occupies residues 1227–1378 (DLNNNNNNNN…KKHLTIINKK (152 aa)). Residues 1289 to 1304 (DGKENDIKNINNKKDE) are compositionally biased toward basic and acidic residues. Positions 1305–1324 (KEDDGDDDDDEDDDEYEDDT) are enriched in acidic residues. Residues 1328–1353 (SSGNSSRSKGSDGGSSSNSLSSDKQS) are compositionally biased toward low complexity. Asn-1331 and Asn-1360 each carry an N-linked (GlcNAc...) asparagine glycan. The span at 1354–1364 (FNNGNENNSII) shows a compositional bias: polar residues. A compositionally biased stretch (basic residues) spans 1368-1378 (KKKHLTIINKK).

The protein resides in the membrane. This Dictyostelium discoideum (Social amoeba) protein is S-cell enriched with leucine-rich repeat-containing protein slrA (slrA).